The sequence spans 124 residues: Glycine cleavage system H protein (124 aa).

Residues 22-104 form the Lipoyl-binding domain; the sequence is LVITGITDHA…YGKGWIYKIK (83 aa). At K63 the chain carries N6-lipoyllysine.

Belongs to the GcvH family. As to quaternary structure, the glycine cleavage system is composed of four proteins: P, T, L and H. The cofactor is (R)-lipoate.

In terms of biological role, the glycine cleavage system catalyzes the degradation of glycine. The H protein shuttles the methylamine group of glycine from the P protein to the T protein. This is Glycine cleavage system H protein from Acinetobacter baumannii (strain SDF).